Consider the following 239-residue polypeptide: Ubiquinone biosynthesis O-methyltransferase (239 aa).

The S-adenosyl-L-methionine site is built by Arg44, Gly63, Asp84, and Met128.

It belongs to the methyltransferase superfamily. UbiG/COQ3 family.

The enzyme catalyses a 3-demethylubiquinol + S-adenosyl-L-methionine = a ubiquinol + S-adenosyl-L-homocysteine + H(+). It carries out the reaction a 3-(all-trans-polyprenyl)benzene-1,2-diol + S-adenosyl-L-methionine = a 2-methoxy-6-(all-trans-polyprenyl)phenol + S-adenosyl-L-homocysteine + H(+). The protein operates within cofactor biosynthesis; ubiquinone biosynthesis. O-methyltransferase that catalyzes the 2 O-methylation steps in the ubiquinone biosynthetic pathway. This chain is Ubiquinone biosynthesis O-methyltransferase, found in Xanthomonas oryzae pv. oryzae (strain MAFF 311018).